A 486-amino-acid polypeptide reads, in one-letter code: Ribosomal RNA small subunit methyltransferase F (486 aa).

S-adenosyl-L-methionine is bound by residues 124-130 (ASAPGSK), Glu-148, Asp-175, and Asp-193. Residue Cys-246 is the Nucleophile of the active site.

This sequence belongs to the class I-like SAM-binding methyltransferase superfamily. RsmB/NOP family.

The protein resides in the cytoplasm. It carries out the reaction cytidine(1407) in 16S rRNA + S-adenosyl-L-methionine = 5-methylcytidine(1407) in 16S rRNA + S-adenosyl-L-homocysteine + H(+). Its function is as follows. Specifically methylates the cytosine at position 1407 (m5C1407) of 16S rRNA. The polypeptide is Ribosomal RNA small subunit methyltransferase F (Shewanella baltica (strain OS223)).